Here is a 621-residue protein sequence, read N- to C-terminus: 1-deoxy-D-xylulose-5-phosphate synthase (621 aa).

Residues histidine 80 and glycine 121–serine 123 contribute to the thiamine diphosphate site. A Mg(2+)-binding site is contributed by aspartate 152. Residues glycine 153–alanine 154, asparagine 181, tyrosine 288, and glutamate 371 contribute to the thiamine diphosphate site. Asparagine 181 contributes to the Mg(2+) binding site.

It belongs to the transketolase family. DXPS subfamily. In terms of assembly, homodimer. Mg(2+) serves as cofactor. The cofactor is thiamine diphosphate.

The enzyme catalyses D-glyceraldehyde 3-phosphate + pyruvate + H(+) = 1-deoxy-D-xylulose 5-phosphate + CO2. Its pathway is metabolic intermediate biosynthesis; 1-deoxy-D-xylulose 5-phosphate biosynthesis; 1-deoxy-D-xylulose 5-phosphate from D-glyceraldehyde 3-phosphate and pyruvate: step 1/1. In terms of biological role, catalyzes the acyloin condensation reaction between C atoms 2 and 3 of pyruvate and glyceraldehyde 3-phosphate to yield 1-deoxy-D-xylulose-5-phosphate (DXP). The sequence is that of 1-deoxy-D-xylulose-5-phosphate synthase from Pectobacterium atrosepticum (strain SCRI 1043 / ATCC BAA-672) (Erwinia carotovora subsp. atroseptica).